Reading from the N-terminus, the 335-residue chain is MRGSVIGSGSFGTALANVLAVNCEEVRLWGRESSVVEAINTQHENPTYLKGIPISERVRATNDLQEALVGSELVVLATPSHATREVVAKAQAYLPRHVPIVTVSKGIENGTLLTMTELLEDCLPEEFHPYLAVLSGPSFAKELARRMPTVVTIASHWDKVALRCQKALQTETFRSYTSTDVVGVQYGGALKNVIAIAAGMADGLGMGHNARAAIITRGLAEITRLAVRKGANPLTLSGLSGMGDLVLTCTGELSRNRHVGMELGKGRKLPDILADMKEVAEGVKTARSAHELELKTGVELPICHQVYLIAHEGKSARTAVVDLMTRQPKSELAGV.

The NADPH site is built by Ser10, Phe11, Arg31, and Lys105. 3 residues coordinate sn-glycerol 3-phosphate: Lys105, Gly136, and Ser138. Ala140 is an NADPH binding site. Lys191, Asp244, Ser254, Arg255, and Asn256 together coordinate sn-glycerol 3-phosphate. The active-site Proton acceptor is Lys191. An NADPH-binding site is contributed by Arg255. The NADPH site is built by Val279 and Glu281.

Belongs to the NAD-dependent glycerol-3-phosphate dehydrogenase family.

It is found in the cytoplasm. It catalyses the reaction sn-glycerol 3-phosphate + NAD(+) = dihydroxyacetone phosphate + NADH + H(+). The enzyme catalyses sn-glycerol 3-phosphate + NADP(+) = dihydroxyacetone phosphate + NADPH + H(+). It functions in the pathway membrane lipid metabolism; glycerophospholipid metabolism. Its function is as follows. Catalyzes the reduction of the glycolytic intermediate dihydroxyacetone phosphate (DHAP) to sn-glycerol 3-phosphate (G3P), the key precursor for phospholipid synthesis. The polypeptide is Glycerol-3-phosphate dehydrogenase [NAD(P)+] (Myxococcus xanthus (strain DK1622)).